We begin with the raw amino-acid sequence, 457 residues long: ADP-dependent glucose/glucosamine kinase (457 aa).

The ADPK domain occupies 5–457; it reads TNWESLYEKA…SAFVSEFSLH (453 aa). D-glucose-binding positions include Asp-37, Glu-91, 115–116, and His-179; that span reads GQ. Glu-269 contributes to the Mg(2+) binding site. Asn-295 is a binding site for ADP. Glu-298 contacts Mg(2+). Residues 345–346, Val-432, and Gly-442 each bind ADP; that span reads HT. Asp-443 is a binding site for D-glucose. Asp-443 contributes to the Mg(2+) binding site. Asp-443 functions as the Proton acceptor in the catalytic mechanism.

It belongs to the ADP-dependent glucokinase family. Requires Mg(2+) as cofactor.

It localises to the cytoplasm. It catalyses the reaction D-glucose + ADP = D-glucose 6-phosphate + AMP + H(+). The enzyme catalyses D-glucosamine + ADP = D-glucosamine 6-phosphate + AMP + H(+). Its pathway is carbohydrate degradation; glycolysis. With respect to regulation, inhibited by 8-bromoadenosine phosphate (8-Br-AMP). Functionally, catalyzes the ADP-dependent phosphorylation of D-glucose to D-glucose 6-phosphate and glucosamine to glucosamine 6-phosphate. The protein is ADP-dependent glucose/glucosamine kinase of Pyrococcus horikoshii (strain ATCC 700860 / DSM 12428 / JCM 9974 / NBRC 100139 / OT-3).